Reading from the N-terminus, the 210-residue chain is dITP/XTP pyrophosphatase (210 aa).

19-24 (SNNPGK) serves as a coordination point for substrate. Mg(2+) contacts are provided by aspartate 51 and aspartate 80. The active-site Proton acceptor is aspartate 80. Residues serine 81, 166–169 (FGYD), lysine 189, and 194–195 (HR) contribute to the substrate site.

Belongs to the HAM1 NTPase family. In terms of assembly, homodimer. Mg(2+) serves as cofactor.

The catalysed reaction is XTP + H2O = XMP + diphosphate + H(+). It carries out the reaction dITP + H2O = dIMP + diphosphate + H(+). The enzyme catalyses ITP + H2O = IMP + diphosphate + H(+). Its function is as follows. Pyrophosphatase that catalyzes the hydrolysis of nucleoside triphosphates to their monophosphate derivatives, with a high preference for the non-canonical purine nucleotides XTP (xanthosine triphosphate), dITP (deoxyinosine triphosphate) and ITP. Seems to function as a house-cleaning enzyme that removes non-canonical purine nucleotides from the nucleotide pool, thus preventing their incorporation into DNA/RNA and avoiding chromosomal lesions. In Burkholderia mallei (strain ATCC 23344), this protein is dITP/XTP pyrophosphatase.